A 335-amino-acid polypeptide reads, in one-letter code: Pyridoxal 5'-phosphate synthase subunit PdxS (335 aa).

A D-ribose 5-phosphate-binding site is contributed by aspartate 59. The active-site Schiff-base intermediate with D-ribose 5-phosphate is the lysine 116. Residue glycine 188 participates in D-ribose 5-phosphate binding. Lysine 200 contacts D-glyceraldehyde 3-phosphate. D-ribose 5-phosphate contacts are provided by residues glycine 253 and 274–275; that span reads GS.

It belongs to the PdxS/SNZ family. In the presence of PdxT, forms a dodecamer of heterodimers.

It catalyses the reaction aldehydo-D-ribose 5-phosphate + D-glyceraldehyde 3-phosphate + L-glutamine = pyridoxal 5'-phosphate + L-glutamate + phosphate + 3 H2O + H(+). Its pathway is cofactor biosynthesis; pyridoxal 5'-phosphate biosynthesis. Functionally, catalyzes the formation of pyridoxal 5'-phosphate from ribose 5-phosphate (RBP), glyceraldehyde 3-phosphate (G3P) and ammonia. The ammonia is provided by the PdxT subunit. Can also use ribulose 5-phosphate and dihydroxyacetone phosphate as substrates, resulting from enzyme-catalyzed isomerization of RBP and G3P, respectively. The protein is Pyridoxal 5'-phosphate synthase subunit PdxS of Hyperthermus butylicus (strain DSM 5456 / JCM 9403 / PLM1-5).